Consider the following 483-residue polypeptide: NADH-quinone oxidoreductase subunit N (483 aa).

The next 14 membrane-spanning stretches (helical) occupy residues 8–28 (INLA…GLLL), 45–65 (IAAG…GATQ), 78–98 (FAAF…VVSW), 106–126 (LGNG…MFMI), 131–151 (FLVL…LAAY), 166–186 (FVLG…IYGV), 206–226 (MLGI…KIAA), 241–261 (PTSV…AALF), 275–295 (WGPI…LAGL), 303–323 (LLAY…AVGN), 330–350 (VLVY…LILV), 373–393 (LALL…LAGF), 399–419 (IFMA…VLFS), and 452–472 (AIVG…GSLM).

This sequence belongs to the complex I subunit 2 family. NDH-1 is composed of 14 different subunits. Subunits NuoA, H, J, K, L, M, N constitute the membrane sector of the complex.

The protein resides in the cell inner membrane. The enzyme catalyses a quinone + NADH + 5 H(+)(in) = a quinol + NAD(+) + 4 H(+)(out). In terms of biological role, NDH-1 shuttles electrons from NADH, via FMN and iron-sulfur (Fe-S) centers, to quinones in the respiratory chain. The immediate electron acceptor for the enzyme in this species is believed to be ubiquinone. Couples the redox reaction to proton translocation (for every two electrons transferred, four hydrogen ions are translocated across the cytoplasmic membrane), and thus conserves the redox energy in a proton gradient. This Magnetococcus marinus (strain ATCC BAA-1437 / JCM 17883 / MC-1) protein is NADH-quinone oxidoreductase subunit N.